The primary structure comprises 252 residues: Probable oligoribonuclease (252 aa).

The Exonuclease domain occupies Val-81 to Gly-241. Tyr-202 is an active-site residue.

This sequence belongs to the oligoribonuclease family.

It localises to the cytoplasm. Its subcellular location is the nucleus. Its function is as follows. 3'-to-5' exoribonuclease specific for small oligoribonucleotides. This is Probable oligoribonuclease (rex2) from Schizosaccharomyces pombe (strain 972 / ATCC 24843) (Fission yeast).